The sequence spans 335 residues: Putative peroxisomal biogenesis factor 19 (335 aa).

Disordered regions lie at residues 14-70 (LETQ…LGND) and 104-124 (YNKD…PSEE). 2 stretches are compositionally biased toward low complexity: residues 22-55 (PTTT…PSTI) and 109-119 (NNNSDDSNNGG).

It belongs to the peroxin-19 family.

It localises to the peroxisome. This chain is Putative peroxisomal biogenesis factor 19 (pex19), found in Dictyostelium discoideum (Social amoeba).